Here is a 606-residue protein sequence, read N- to C-terminus: Glucose methanol choline oxidoreductase atC (606 aa).

Positions 1-19 (MRVFPTYIAVSGLFGGAFA) are cleaved as a signal peptide. Residues asparagine 43, asparagine 69, asparagine 87, asparagine 290, asparagine 368, asparagine 418, asparagine 421, and asparagine 552 are each glycosylated (N-linked (GlcNAc...) asparagine).

This sequence belongs to the GMC oxidoreductase family.

It catalyses the reaction terremutin + A = terreate + AH2. It functions in the pathway secondary metabolite biosynthesis. Glucose methanol choline oxidoreductase; part of the gene cluster that mediates the biosynthesis of terreic acid, a quinone epoxide inhibitor of Bruton's tyrosine kinase. The first step of the pathway is the synthesis of 6-methylsalicylic acid (6-MSA) by the 6-methylsalicylic acid synthase atX. In the biosynthesis of 6-MSA, atX utilizes one acetyl-CoA and three malonyl-CoAs as its substrates and catalyzes a series of programmed reactions including Claisen condensation, reduction, aldol cyclization, and the hydrolytic cleavage that yields 6-MSA. The 6-methylsalicylate 1-monooxygenase atA then catalyzes the decarboxylative hydroxylation of 6-MSA to 3-methylcatechol. The next step is the conversion of 3-methylcatechol to 3-methyl-1,2,4-benzenetriol by cytochrome P450 monooxygenase atE, which is enhanced by cytochrome P450 monooxygenase atG. Then, the epoxidase atD catalyzes the epoxidation and hydroxyl oxidation of 3-methyl-1,2,4-benzenetriol to terremutin. Lastly, GMC oxidoreductase atC oxidizes terremutin to terreic acid. The protein is Glucose methanol choline oxidoreductase atC of Aspergillus terreus (strain NIH 2624 / FGSC A1156).